We begin with the raw amino-acid sequence, 402 residues long: UDP-GlcNAc:betaGal beta-1,3-N-acetylglucosaminyltransferase 9 (402 aa).

Over 1 to 10 (MRRRLRLRRD) the chain is Cytoplasmic. The helical; Signal-anchor for type II membrane protein transmembrane segment at 11-27 (ALLTLLLGASLGLLLYA) threads the bilayer. Topologically, residues 28-402 (QRDGAAPTAS…VAAGPFQWDS (375 aa)) are lumenal. Low complexity predominate over residues 32–47 (AAPTASAPRGRGRAAP). Residues 32–83 (AAPTASAPRGRGRAAPRPTPGPRAFQLPDAGAAPPAYEGDTPAPPTPTGPFD) are disordered.

It belongs to the glycosyltransferase 31 family.

It localises to the golgi apparatus membrane. This is UDP-GlcNAc:betaGal beta-1,3-N-acetylglucosaminyltransferase 9 from Homo sapiens (Human).